A 114-amino-acid polypeptide reads, in one-letter code: Hydrogenase maturation factor HypA (114 aa).

Histidine 2 provides a ligand contact to Ni(2+). Zn(2+) is bound by residues cysteine 73, cysteine 76, cysteine 90, and cysteine 93.

Belongs to the HypA/HybF family.

In terms of biological role, involved in the maturation of [NiFe] hydrogenases. Required for nickel insertion into the metal center of the hydrogenase. This chain is Hydrogenase maturation factor HypA, found in Chloroflexus aggregans (strain MD-66 / DSM 9485).